A 173-amino-acid chain; its full sequence is Archaemetzincin (173 aa).

Zn(2+) is bound at residue H130. The active-site Proton acceptor is the E131. Residues H134, H140, C141, C146, C165, and C168 each contribute to the Zn(2+) site.

Belongs to the peptidase M54 family. In terms of assembly, monomer. Zn(2+) serves as cofactor.

Probable zinc metalloprotease whose natural substrate is unknown. The protein is Archaemetzincin of Haloquadratum walsbyi (strain DSM 16790 / HBSQ001).